The sequence spans 972 residues: Aminopeptidase Ey (972 aa).

Topologically, residues 2–10 (AAGFFISKS) are cytoplasmic. The helical; Signal-anchor for type II membrane protein transmembrane segment at 11–31 (VGIVGIVLALGAVATIIALSV) threads the bilayer. Residues 32 to 972 (VYAQEKNKSS…AWFRAETASS (941 aa)) are Extracellular-facing. Residues 33–72 (YAQEKNKSSGGSGGSDTTSTTTASTTTTSTTTASTTAAPN) form a cytosolic Ser/Thr-rich junction region. Residues 37 to 77 (KNKSSGGSGGSDTTSTTTASTTTTSTTTASTTAAPNNPWNR) form a disordered region. An N-linked (GlcNAc...) asparagine glycan is attached at Asn-38. The span at 47 to 70 (SDTTSTTTASTTTTSTTTASTTAA) shows a compositional bias: low complexity. Residues 73–967 (NPWNRWRLPT…KEVVHAWFRA (895 aa)) are metalloprotease. N-linked (GlcNAc...) asparagine glycosylation is found at Asn-110, Asn-132, Asn-147, Asn-206, Asn-269, and Asn-296. 355-359 (GAMEN) contributes to the substrate binding site. His-391 serves as a coordination point for Zn(2+). Glu-392 functions as the Proton acceptor in the catalytic mechanism. Zn(2+) is bound by residues His-395 and Glu-414. 6 N-linked (GlcNAc...) asparagine glycosylation sites follow: Asn-513, Asn-574, Asn-584, Asn-628, Asn-684, and Asn-742. A disulfide bond links Cys-764 and Cys-771. An N-linked (GlcNAc...) asparagine glycan is attached at Asn-785. Cys-801 and Cys-837 form a disulfide bridge.

It belongs to the peptidase M1 family. In terms of assembly, homodimer. It depends on Zn(2+) as a cofactor. As to expression, detected in the plasma and granule fractions of egg yolk (at protein level).

The protein localises to the cell membrane. The catalysed reaction is Differs from other aminopeptidases in broad specificity for amino acids in the P1 position and the ability to hydrolyze peptides of four or five residues that contain Pro in the P1' position.. In terms of biological role, broad specificity aminopeptidase. Degrades a variety of peptides possessing various N-terminal amino acids including hydrophobic, basic and acidic amino acids. Preferentially hydrolyzes small peptides consisting of 4 or 5 amino acids. Hydrolyzes the N-terminal Xaa-Pro bonds in the chicken brain peptide Leu-Pro-Leu-Arg-PheNH2, the substance P fragment Arg-Pro-Lys-Pro and the bradykinin fragment Arg-Pro-Pro-Gly-Phe. Hydrolyzes the N-formylated peptides fMet-Leu-Phe, fMet-Ala-Gly-Ser-Glu and fMet-Nle-Leu-Phe-Nle-Tyr-Lys, but does not hydrolyze peptides with acetylation or pyroglutamic acid at N-terminus. Does not hydrolyze large peptides such as complete substance P, bradykinin or schistoFLRFamide. This is Aminopeptidase Ey (ANPEP) from Gallus gallus (Chicken).